A 244-amino-acid polypeptide reads, in one-letter code: MEMKRRVRAVRRDQIQKRWRPLEDKQRQEIIIIFRTCSRLVLNTIKSETRKSLAEEWFMNILLKIEAPLRNLPVPRKRKESILFSQLLSSNMQLEQQLYSDLDHINVLQQELKVETARLENEQKSYEEMKQNMAINNSRLADLKSKLHPYLKKGLKISHDNFSDSNDFSFQKKLNTEDSNTSKTSTLDMYKEKLKPFTKTMQIHANKTVQLSQTIQKATLLLQRLNNTKNIGLNKSSKLKIKNI.

It belongs to the CENP-Q/OKP1 family. In terms of assembly, component of the heterotetrameric kinetochore subcomplex COMA, which consists of fta2, fta7, mal2 and mis17. The COMA subcomplex is part of a larger constitutive centromere-associated network (CCAN) (also known as central kinetochore Sim4 complex in fission yeast), which is composed of at least cnl2, cnp3, cnp20, fta1, fta2, fta3, fta4, fta6, fta7, mal2, mhf1, mhf2, mis6, mis15, mis17, sim4 and wip1.

It is found in the nucleus. The protein resides in the chromosome. It localises to the centromere. Its subcellular location is the kinetochore. The protein localises to the cytoplasm. It is found in the cytoskeleton. The protein resides in the microtubule organizing center. It localises to the spindle pole body. Functionally, component of the kinetochore, a multiprotein complex that assembles on centromeric DNA and attaches chromosomes to spindle microtubules, mediating chromosome segregation and sister chromatid segregation during meiosis and mitosis. Component of the inner kinetochore COMA complex, which connects centromere-associated proteins and the outer kinetochore. COMA interacts with other inner kinetochore proteins to form the inner kinetochore constitutive centromere-associated network (CCAN), which serves as a structural platform for outer kinetochore assembly. The polypeptide is Inner kinetochore subunit fta7 (fta7) (Schizosaccharomyces pombe (strain 972 / ATCC 24843) (Fission yeast)).